A 310-amino-acid polypeptide reads, in one-letter code: MNELPLHLLNMRSLTRDHIEKLIQRANYFLTQGMEKNSVFETLKGHVVANLFFEPSTRTRNSFEIAAKRLGAMVLNPNLKISAISKGETLFDTIKTLEAMGVYFFIVRHSENETPEQIAKQLSSGVVINAGDGNHQHPSQALIDLMTIKQHKPHWNKLCVTIIGDIRHSRVANSLMDGLVTMGVPEIRLVGPSSLLPDKVGNDSIKKFTELKPSLLNSDVIVTLRLQKERHDNSVDIDAFRGSFRLTPEKLYSAKPDAIVMHPGPVNREVEINSDVADNQQSVILQQVRNGVAMRMAVLELFLLRDFRFF.

Carbamoyl phosphate-binding residues include Arg58 and Thr59. Lys86 contacts L-aspartate. Carbamoyl phosphate is bound by residues Arg108, His137, and Gln140. L-aspartate-binding residues include Arg170 and Arg225. Carbamoyl phosphate contacts are provided by Gly264 and Pro265.

This sequence belongs to the aspartate/ornithine carbamoyltransferase superfamily. ATCase family. Heterododecamer (2C3:3R2) of six catalytic PyrB chains organized as two trimers (C3), and six regulatory PyrI chains organized as three dimers (R2).

It carries out the reaction carbamoyl phosphate + L-aspartate = N-carbamoyl-L-aspartate + phosphate + H(+). It functions in the pathway pyrimidine metabolism; UMP biosynthesis via de novo pathway; (S)-dihydroorotate from bicarbonate: step 2/3. Functionally, catalyzes the condensation of carbamoyl phosphate and aspartate to form carbamoyl aspartate and inorganic phosphate, the committed step in the de novo pyrimidine nucleotide biosynthesis pathway. This Coxiella burnetii (strain CbuG_Q212) (Coxiella burnetii (strain Q212)) protein is Aspartate carbamoyltransferase catalytic subunit.